We begin with the raw amino-acid sequence, 338 residues long: DNA-directed RNA polymerase subunit alpha (338 aa).

The alpha N-terminal domain (alpha-NTD) stretch occupies residues 1 to 226 (MLIAQRPTLT…ELFGLTRELN (226 aa)). An alpha C-terminal domain (alpha-CTD) region spans residues 243–338 (YAESLGTPVE…DDDYAETEQY (96 aa)). The disordered stretch occupies residues 319-338 (AAAEAYDEANDDDYAETEQY). Over residues 323–338 (AYDEANDDDYAETEQY) the composition is skewed to acidic residues.

This sequence belongs to the RNA polymerase alpha chain family. In terms of assembly, homodimer. The RNAP catalytic core consists of 2 alpha, 1 beta, 1 beta' and 1 omega subunit. When a sigma factor is associated with the core the holoenzyme is formed, which can initiate transcription.

It catalyses the reaction RNA(n) + a ribonucleoside 5'-triphosphate = RNA(n+1) + diphosphate. In terms of biological role, DNA-dependent RNA polymerase catalyzes the transcription of DNA into RNA using the four ribonucleoside triphosphates as substrates. The polypeptide is DNA-directed RNA polymerase subunit alpha (Cutibacterium acnes (strain DSM 16379 / KPA171202) (Propionibacterium acnes)).